The following is a 66-amino-acid chain: DNA gyrase inhibitor YacG (66 aa).

Residues cysteine 9, cysteine 12, cysteine 28, and cysteine 32 each coordinate Zn(2+). Residues 45–66 (HKIAGSQESEDELYSGDLEPRH) form a disordered region.

Belongs to the DNA gyrase inhibitor YacG family. Interacts with GyrB. Zn(2+) serves as cofactor.

Functionally, inhibits all the catalytic activities of DNA gyrase by preventing its interaction with DNA. Acts by binding directly to the C-terminal domain of GyrB, which probably disrupts DNA binding by the gyrase. The sequence is that of DNA gyrase inhibitor YacG from Pseudomonas putida (strain W619).